The sequence spans 460 residues: ATP synthase subunit beta (460 aa).

An ATP-binding site is contributed by 150–157 (GGAGVGKT).

This sequence belongs to the ATPase alpha/beta chains family. As to quaternary structure, F-type ATPases have 2 components, CF(1) - the catalytic core - and CF(0) - the membrane proton channel. CF(1) has five subunits: alpha(3), beta(3), gamma(1), delta(1), epsilon(1). CF(0) has three main subunits: a(1), b(2) and c(9-12). The alpha and beta chains form an alternating ring which encloses part of the gamma chain. CF(1) is attached to CF(0) by a central stalk formed by the gamma and epsilon chains, while a peripheral stalk is formed by the delta and b chains.

Its subcellular location is the cell inner membrane. The catalysed reaction is ATP + H2O + 4 H(+)(in) = ADP + phosphate + 5 H(+)(out). In terms of biological role, produces ATP from ADP in the presence of a proton gradient across the membrane. The catalytic sites are hosted primarily by the beta subunits. The sequence is that of ATP synthase subunit beta from Shigella dysenteriae serotype 1 (strain Sd197).